We begin with the raw amino-acid sequence, 142 residues long: Putative pre-16S rRNA nuclease (142 aa).

The protein belongs to the YqgF nuclease family.

It is found in the cytoplasm. Could be a nuclease involved in processing of the 5'-end of pre-16S rRNA. This is Putative pre-16S rRNA nuclease from Staphylococcus epidermidis (strain ATCC 35984 / DSM 28319 / BCRC 17069 / CCUG 31568 / BM 3577 / RP62A).